Consider the following 97-residue polypeptide: Carboxypeptidase inhibitor (97 aa).

Positions 1–22 are cleaved as a signal peptide; it reads MAATLPVFAVVFFAMVLASSQA.

Its subcellular location is the secreted. Functionally, potent competitive inhibitor of metallo-carboxypeptidases CPA1, CPA2, CPB, CPN, and TAF1a. Also inhibits human CPA4. Accelerates fibrinolysis in vitro and may contribute to the maintenance of host blood liquidity during feeding. This is Carboxypeptidase inhibitor from Rhipicephalus bursa (Tick).